A 366-amino-acid polypeptide reads, in one-letter code: DNA primase large subunit PriL (366 aa).

Positions 227, 298, 307, and 314 each coordinate [4Fe-4S] cluster.

The protein belongs to the eukaryotic-type primase large subunit family. As to quaternary structure, heterodimer of a small subunit (PriS) and a large subunit (PriL). The cofactor is [4Fe-4S] cluster.

Regulatory subunit of DNA primase, an RNA polymerase that catalyzes the synthesis of short RNA molecules used as primers for DNA polymerase during DNA replication. Stabilizes and modulates the activity of the small subunit, increasing the rate of DNA synthesis, and conferring RNA synthesis capability. The DNA polymerase activity may enable DNA primase to also catalyze primer extension after primer synthesis. May also play a role in DNA repair. This is DNA primase large subunit PriL from Methanocella arvoryzae (strain DSM 22066 / NBRC 105507 / MRE50).